We begin with the raw amino-acid sequence, 261 residues long: Phosphoinositide-3-kinase-interacting protein 1 (261 aa).

Positions 1-21 (MLLAWVRTILVSNMLLAEAYG) are cleaved as a signal peptide. The Extracellular segment spans residues 22–166 (SGGCFWDNGH…NSKEKKDLGT (145 aa)). The region spanning 24-101 (GCFWDNGHLY…EKRPCQDLRC (78 aa)) is the Kringle domain. Cystine bridges form between C25/C101, C46/C82, and C70/C96. Over residues 90 to 101 (APEKRPCQDLRC) the composition is skewed to basic and acidic residues. Residues 90–122 (APEKRPCQDLRCPDTTSQGLPTSATETEEAAEV) form a disordered region. A helical membrane pass occupies residues 167–187 (LGYVLGITMMVIIVVIGAGIV). Residues 188-261 (LGYTYKRGKD…LMGQAGTPGA (74 aa)) lie on the Cytoplasmic side of the membrane.

Its subcellular location is the cell membrane. Functionally, negative regulator of hepatic phosphatidylinositol 3-kinase (PI3K) activity. In Bos taurus (Bovine), this protein is Phosphoinositide-3-kinase-interacting protein 1 (PIK3IP1).